A 145-amino-acid chain; its full sequence is Large ribosomal subunit protein uL11m (145 aa).

The protein belongs to the universal ribosomal protein uL11 family.

The protein localises to the mitochondrion. This Reclinomonas americana protein is Large ribosomal subunit protein uL11m (RPL11).